Here is a 656-residue protein sequence, read N- to C-terminus: CoB--CoM heterodisulfide reductase iron-sulfur subunit A 2 (656 aa).

Position 152 to 175 (152 to 175 (GGGVSGIQAALDLADMGFEVILVE)) interacts with FAD. 4Fe-4S ferredoxin-type domains are found at residues 238–269 (KKPRYVDEDACTGCGACAEVCPIEVPNEFDEG), 286–315 (SVFTIDEEHCIRCGLCEEVCDADAIDFDQE), 577–606 (IVSEVDEEICGGCGTCVELCPYGAIELVEK), and 610–639 (LVAEVTAALCKGCGTCAAACPSGAMEQNHF). Positions 248, 251, 254, 258, 295, 298, 301, 305, 586, 589, 592, 596, 619, 622, 625, and 629 each coordinate [4Fe-4S] cluster.

The protein belongs to the HdrA family. As to quaternary structure, the ferredoxin:CoB-CoM heterodisulfide reductase is composed of three subunits; HdrA, HdrB and HdrC. Requires [4Fe-4S] cluster as cofactor. It depends on FAD as a cofactor.

The protein operates within cofactor metabolism; coenzyme M-coenzyme B heterodisulfide reduction; coenzyme B and coenzyme M from coenzyme M-coenzyme B heterodisulfide: step 1/1. In terms of biological role, part of a complex that catalyzes the reversible reduction of CoM-S-S-CoB to the thiol-coenzymes H-S-CoM (coenzyme M) and H-S-CoB (coenzyme B). This Methanopyrus kandleri (strain AV19 / DSM 6324 / JCM 9639 / NBRC 100938) protein is CoB--CoM heterodisulfide reductase iron-sulfur subunit A 2 (hdrA2).